Reading from the N-terminus, the 561-residue chain is Shugoshin 1 (561 aa).

The necessary for interaction with PPP2CA and PPP2R1A stretch occupies residues 1–176 (MAKERCLKKS…DTLGVDFDSG (176 aa)). Residues 7 to 89 (LKKSFQDSLE…DIILQLRKEC (83 aa)) are a coiled coil. Ser-14 is subject to Phosphoserine; by NEK2. Positions 192 to 200 (RSSLKKHCN) match the D-box 1 motif. Position 256 is a phosphoserine (Ser-256). Disordered stretches follow at residues 260-331 (IQPG…SVSS) and 348-441 (FRQK…HLSL). Positions 267 to 296 (KTKEDILESKSEQTKSKQRDTQERKREEKR) are enriched in basic and acidic residues. The stretch at 273–313 (LESKSEQTKSKQRDTQERKREEKRKANRRKSKRMSKYKENK) forms a coiled coil. Positions 297 to 307 (KANRRKSKRMS) are enriched in basic residues. Residues 308-318 (KYKENKSENKK) show a composition bias toward basic and acidic residues. The short motif at 310-312 (KEN) is the KEN box element. Positions 364-375 (SEVSLCESSGSG) are enriched in low complexity. Residues 388-398 (YIQNPTSNSDR) are compositionally biased toward polar residues. Over residues 410–421 (KYTDEKETEGSK) the composition is skewed to basic and acidic residues. Positions 422–433 (PTKTPTTTPPET) are enriched in low complexity. Phosphoserine is present on Ser-436. Positions 438 to 446 (HLSLKDITN) match the D-box 2 motif. The PXVXL/I motif motif lies at 451-455 (PVVKI). The short motif at 457–465 (RLSLSPKKN) is the D-box 3 element. At Ser-507 the chain carries Phosphoserine; by NEK2.

The protein belongs to the shugoshin family. In terms of assembly, interacts with PPP2CA (or PPP2CB), PPP2R1B, PPP2R5A, PPP2R5B, PPP2R5C, PPP2R5D, PPP2R5E, SET, LRRC59, RBM10 (or RBM5), RPL10A, RPL28, RPL7, RPL7A and RPLP1. Interaction with protein phosphatase 2A occurs most probably through direct binding to the regulatory B56 subunits: PPP2R1B, PPP2R5A, PPP2R5B, PPP2R5C, PPP2R5D, PPP2R5E. Interacts with PPP2R1A and NEK2. Isoform 3 interacts with PLK1. Interacts with CDCA8. Post-translationally, ubiquitinated and degraded during mitotic exit by APC/C-Cdh1. Phosphorylation by NEK2 is essential for chromosome congression in mitosis and for the proper attachment of spindle microtubule to the kinetochore. Phosphorylated by PLK1 and AUKRB. As to expression, widely expressed. Highly expressed in testis. Expressed in lung, small intestine, breast, liver and placenta. Strongly overexpressed in 90% of breast cancers tested.

It localises to the nucleus. The protein localises to the chromosome. It is found in the centromere. Its subcellular location is the kinetochore. The protein resides in the cytoplasm. It localises to the cytoskeleton. The protein localises to the spindle pole. It is found in the microtubule organizing center. Its subcellular location is the centrosome. The protein resides in the nucleus speckle. Plays a central role in chromosome cohesion during mitosis by preventing premature dissociation of cohesin complex from centromeres after prophase, when most of cohesin complex dissociates from chromosomes arms. May act by preventing phosphorylation of the STAG2 subunit of cohesin complex at the centromere, ensuring cohesin persistence at centromere until cohesin cleavage by ESPL1/separase at anaphase. Essential for proper chromosome segregation during mitosis and this function requires interaction with PPP2R1A. Its phosphorylated form is necessary for chromosome congression and for the proper attachment of spindle microtubule to the kinetochore. Necessary for kinetochore localization of PLK1 and CENPF. May play a role in the tension sensing mechanism of the spindle-assembly checkpoint by regulating PLK1 kinetochore affinity. Isoform 3 plays a role in maintaining centriole cohesion involved in controlling spindle pole integrity. Involved in centromeric enrichment of AUKRB in prometaphase. This Homo sapiens (Human) protein is Shugoshin 1.